A 177-amino-acid polypeptide reads, in one-letter code: ATP-dependent protease subunit HslV (177 aa).

Threonine 6 is a catalytic residue. Na(+)-binding residues include alanine 162, cysteine 165, and threonine 168.

The protein belongs to the peptidase T1B family. HslV subfamily. A double ring-shaped homohexamer of HslV is capped on each side by a ring-shaped HslU homohexamer. The assembly of the HslU/HslV complex is dependent on binding of ATP.

The protein localises to the cytoplasm. It catalyses the reaction ATP-dependent cleavage of peptide bonds with broad specificity.. Its activity is regulated as follows. Allosterically activated by HslU binding. Functionally, protease subunit of a proteasome-like degradation complex believed to be a general protein degrading machinery. The chain is ATP-dependent protease subunit HslV from Lawsonia intracellularis (strain PHE/MN1-00).